Consider the following 496-residue polypeptide: MALWRGSACAGFLALAVGCVFLLEPELPGTALRSLWSSLRLGPAPVPVGPLSPESRLAAAWDALIAQPARRWRRVAVGVNACVDVVISGVKLLQALGLSPGSGKDHAILHSRSDLEEAFLYFMGKGAAAERFFSDKETFHDIAQAASEFPGAQHYVGGNAALIGQRFAANTDLKVLLCGPIGPKLHELLDDNVFVPPESLQEEDEFHLILEYLAGEEWGPFKAPHANRFIFSHDLSNGAMNMLEVFVSSLEEFQPDLVVLSGLHMMEGQSKELQRKRLLEVVTAISDIPTGIPVHLELASMTNRELMSSIVHQQVFPAVASLGLNEQELLFLSQSASGPHSSLSSWDGVPDVGMVSDILFWILKEHGRSENRASDLTRIHFHTLVYHILATVDGHWANQLAAVAAGARVAGTQACATETIDTNRVSLRAPQEFTTSHLESGSRIVLNPDKPVVEWHREGITFHFTPVLVCKDPVRTVGLGDAISAEGLFYSEARPD.

Positions Met-1–Leu-22 are cleaved as a signal peptide. Positions Ser-52 to Asp-496 constitute an ADPK domain. Mg(2+) contacts are provided by Glu-297, Glu-328, and Asp-481. Asp-481 functions as the Proton acceptor in the catalytic mechanism.

The protein belongs to the ADP-dependent glucokinase family. Monomer. Mg(2+) serves as cofactor.

The protein localises to the secreted. The enzyme catalyses D-glucose + ADP = D-glucose 6-phosphate + AMP + H(+). It functions in the pathway carbohydrate degradation; glycolysis. Catalyzes the phosphorylation of D-glucose to D-glucose 6-phosphate using ADP as the phosphate donor. GDP and CDP can replace ADP, but with reduced efficiency. This Mus musculus (Mouse) protein is ADP-dependent glucokinase (Adpgk).